The primary structure comprises 144 residues: NADPH-dependent 7-cyano-7-deazaguanine reductase (144 aa).

Polar residues predominate over residues 1 to 21 (MSQSPIQNPTSDPNAQSVQET). The disordered stretch occupies residues 1–27 (MSQSPIQNPTSDPNAQSVQETSESKYG). The active-site Thioimide intermediate is Cys61. Asp68 (proton donor) is an active-site residue. Substrate is bound by residues 83 to 85 (VEL) and 102 to 103 (HE).

Belongs to the GTP cyclohydrolase I family. QueF type 1 subfamily.

Its subcellular location is the cytoplasm. The catalysed reaction is 7-aminomethyl-7-carbaguanine + 2 NADP(+) = 7-cyano-7-deazaguanine + 2 NADPH + 3 H(+). Its pathway is tRNA modification; tRNA-queuosine biosynthesis. Its function is as follows. Catalyzes the NADPH-dependent reduction of 7-cyano-7-deazaguanine (preQ0) to 7-aminomethyl-7-deazaguanine (preQ1). The protein is NADPH-dependent 7-cyano-7-deazaguanine reductase of Acaryochloris marina (strain MBIC 11017).